Reading from the N-terminus, the 187-residue chain is GTP cyclohydrolase 1 (187 aa).

Residues C76, H79, and C148 each contribute to the Zn(2+) site.

It belongs to the GTP cyclohydrolase I family. In terms of assembly, toroid-shaped homodecamer, composed of two pentamers of five dimers.

It carries out the reaction GTP + H2O = 7,8-dihydroneopterin 3'-triphosphate + formate + H(+). Its pathway is cofactor biosynthesis; 7,8-dihydroneopterin triphosphate biosynthesis; 7,8-dihydroneopterin triphosphate from GTP: step 1/1. In Acetivibrio thermocellus (strain ATCC 27405 / DSM 1237 / JCM 9322 / NBRC 103400 / NCIMB 10682 / NRRL B-4536 / VPI 7372) (Clostridium thermocellum), this protein is GTP cyclohydrolase 1.